The sequence spans 358 residues: Pre-mRNA-splicing factor spp2 (358 aa).

Disordered stretches follow at residues 1–250 and 298–358; these read MTDQ…RAVP and AWNQ…RGDR. Residues 24-40 are compositionally biased toward basic residues; sequence KTKKPSRPTHTRRHHAR. Basic and acidic residues-rich tracts occupy residues 80-137 and 145-160; these read LENR…DASR and RSRDRDHKPKDPKDLQ. Residues 174–185 show a composition bias toward polar residues; that stretch reads NPKSTTTATSSF. Composition is skewed to basic and acidic residues over residues 233-246 and 309-358; these read SSHDRDRSPDHSDY and GDSR…RGDR.

This sequence belongs to the SPP2 family. Associated with the spliceosome.

The protein localises to the nucleus. Involved in spliceosome maturation and the first step of pre-mRNA splicing. The protein is Pre-mRNA-splicing factor spp2 (msp-40) of Neurospora crassa (strain ATCC 24698 / 74-OR23-1A / CBS 708.71 / DSM 1257 / FGSC 987).